A 387-amino-acid polypeptide reads, in one-letter code: Ferrochelatase (387 aa).

Positions 196 and 277 each coordinate Fe cation.

It belongs to the ferrochelatase family.

It is found in the cytoplasm. The catalysed reaction is heme b + 2 H(+) = protoporphyrin IX + Fe(2+). The protein operates within porphyrin-containing compound metabolism; protoheme biosynthesis; protoheme from protoporphyrin-IX: step 1/1. Catalyzes the ferrous insertion into protoporphyrin IX. The sequence is that of Ferrochelatase from Synechococcus elongatus (strain ATCC 33912 / PCC 7942 / FACHB-805) (Anacystis nidulans R2).